We begin with the raw amino-acid sequence, 325 residues long: All-trans-nonaprenyl-diphosphate synthase (geranyl-diphosphate specific) (325 aa).

Positions 48, 51, and 81 each coordinate isopentenyl diphosphate. Asp88 and Asp92 together coordinate Mg(2+). Residue Arg97 participates in an all-trans-polyprenyl diphosphate binding. Position 98 (Arg98) interacts with isopentenyl diphosphate. An all-trans-polyprenyl diphosphate contacts are provided by Lys174, Thr175, Gln211, and Lys228.

Belongs to the FPP/GGPP synthase family. In terms of assembly, homodimer. Mg(2+) is required as a cofactor.

The enzyme catalyses 7 isopentenyl diphosphate + (2E)-geranyl diphosphate = all-trans-nonaprenyl diphosphate + 7 diphosphate. Functionally, catalyzes the sequential condensation of isopentenyl diphosphate (IPP) with the allylic substrate to give solanesyl diphosphate. Could be important to determine the side chain length of ubiquinone. This chain is All-trans-nonaprenyl-diphosphate synthase (geranyl-diphosphate specific) (sdsA), found in Rhodobacter capsulatus (Rhodopseudomonas capsulata).